The chain runs to 89 residues: Small ribosomal subunit protein uS15 (89 aa).

It belongs to the universal ribosomal protein uS15 family. In terms of assembly, part of the 30S ribosomal subunit. Forms a bridge to the 50S subunit in the 70S ribosome, contacting the 23S rRNA.

In terms of biological role, one of the primary rRNA binding proteins, it binds directly to 16S rRNA where it helps nucleate assembly of the platform of the 30S subunit by binding and bridging several RNA helices of the 16S rRNA. Its function is as follows. Forms an intersubunit bridge (bridge B4) with the 23S rRNA of the 50S subunit in the ribosome. This is Small ribosomal subunit protein uS15 from Cyanothece sp. (strain PCC 7425 / ATCC 29141).